Reading from the N-terminus, the 504-residue chain is Maturase K (504 aa).

Belongs to the intron maturase 2 family. MatK subfamily.

The protein resides in the plastid. Its subcellular location is the chloroplast. Its function is as follows. Usually encoded in the trnK tRNA gene intron. Probably assists in splicing its own and other chloroplast group II introns. In Arabidopsis halleri, this protein is Maturase K.